A 230-amino-acid chain; its full sequence is Ribonuclease 3 (230 aa).

One can recognise an RNase III domain in the interval 1–134 (MKQLEELLST…FLGALLLDKG (134 aa)). Residue E47 participates in Mg(2+) binding. Residue D51 is part of the active site. 2 residues coordinate Mg(2+): D120 and E123. E123 is an active-site residue. The region spanning 160–229 (DYKTCLQEFL…AKNALAQLSE (70 aa)) is the DRBM domain.

It belongs to the ribonuclease III family. In terms of assembly, homodimer. Requires Mg(2+) as cofactor.

It localises to the cytoplasm. It carries out the reaction Endonucleolytic cleavage to 5'-phosphomonoester.. Functionally, digests double-stranded RNA. Involved in the processing of primary rRNA transcript to yield the immediate precursors to the large and small rRNAs (23S and 16S). Processes some mRNAs, and tRNAs when they are encoded in the rRNA operon. Processes pre-crRNA and tracrRNA of type II CRISPR loci if present in the organism. This is Ribonuclease 3 from Streptococcus pyogenes serotype M3 (strain SSI-1).